The following is a 203-amino-acid chain: Thymidylate kinase (203 aa).

7-14 serves as a coordination point for ATP; that stretch reads GGEGAGKT.

This sequence belongs to the thymidylate kinase family.

It carries out the reaction dTMP + ATP = dTDP + ADP. Phosphorylation of dTMP to form dTDP in both de novo and salvage pathways of dTTP synthesis. The polypeptide is Thymidylate kinase (Chlamydia trachomatis serovar L2 (strain ATCC VR-902B / DSM 19102 / 434/Bu)).